We begin with the raw amino-acid sequence, 187 residues long: Large ribosomal subunit protein bL9 (187 aa).

The segment at 168–187 (EEAPAEEDVAAEETSEAAEA) is disordered.

It belongs to the bacterial ribosomal protein bL9 family.

Binds to the 23S rRNA. The sequence is that of Large ribosomal subunit protein bL9 from Paramagnetospirillum magneticum (strain ATCC 700264 / AMB-1) (Magnetospirillum magneticum).